Reading from the N-terminus, the 331-residue chain is Glyceraldehyde-3-phosphate dehydrogenase (331 aa).

NAD(+) is bound by residues 12–13 (RI), D34, R78, and T120. D-glyceraldehyde 3-phosphate-binding positions include 149–151 (SCT), T180, 209–210 (TG), and R232. Catalysis depends on C150, which acts as the Nucleophile. Residue N314 participates in NAD(+) binding.

This sequence belongs to the glyceraldehyde-3-phosphate dehydrogenase family. Homotetramer.

The protein localises to the cytoplasm. It catalyses the reaction D-glyceraldehyde 3-phosphate + phosphate + NAD(+) = (2R)-3-phospho-glyceroyl phosphate + NADH + H(+). It participates in carbohydrate degradation; glycolysis; pyruvate from D-glyceraldehyde 3-phosphate: step 1/5. Functionally, catalyzes the oxidative phosphorylation of glyceraldehyde 3-phosphate (G3P) to 1,3-bisphosphoglycerate (BPG) using the cofactor NAD. The first reaction step involves the formation of a hemiacetal intermediate between G3P and a cysteine residue, and this hemiacetal intermediate is then oxidized to a thioester, with concomitant reduction of NAD to NADH. The reduced NADH is then exchanged with the second NAD, and the thioester is attacked by a nucleophilic inorganic phosphate to produce BPG. In Shimwellia blattae (strain ATCC 29907 / DSM 4481 / JCM 1650 / NBRC 105725 / CDC 9005-74) (Escherichia blattae), this protein is Glyceraldehyde-3-phosphate dehydrogenase (gapA).